A 303-amino-acid chain; its full sequence is Vacuolar protein sorting-associated protein 26B (303 aa).

Belongs to the VPS26 family. In terms of assembly, component of the retromer complex which consists of VPS29 (MAG1), VPS26 (VPS26A or VPS26B), VPS35 (VPS35A or VPS35B or VPS35C), VPS5/17 (SNX1 or SNX2A or SNX2B). Component of a retromer subcomplex consisting of VPS29 (MAG1), VPS26 (VPS26A or VPS26B), VPS35 (VPS35A or VPS35B or VPS35C).

Its subcellular location is the cytoplasm. The protein localises to the endosome membrane. The protein resides in the prevacuolar compartment membrane. It localises to the golgi apparatus. It is found in the trans-Golgi network membrane. Plays a role in vesicular protein sorting. Component of the membrane-associated retromer complex which is essential in endosome-to-Golgi retrograde transport. The VPS29-VPS26-VPS35 subcomplex may be involved in recycling of specific cargos from endosome to the plasma membrane. The chain is Vacuolar protein sorting-associated protein 26B (VPS26B) from Arabidopsis thaliana (Mouse-ear cress).